Reading from the N-terminus, the 436-residue chain is GTPase Der (436 aa).

2 EngA-type G domains span residues 4-167 and 176-351; these read PVIA…PKIE and IRFS…ESHS. Residues 10 to 17, 57 to 61, 119 to 122, 182 to 189, 229 to 233, and 294 to 297 each bind GTP; these read GRPNVGKS, DTGGI, NKVD, DTAGM, and NKWD. The KH-like domain maps to 352–436; the sequence is IRIQTNVLND…PIHIIARARD (85 aa).

Belongs to the TRAFAC class TrmE-Era-EngA-EngB-Septin-like GTPase superfamily. EngA (Der) GTPase family. Associates with the 50S ribosomal subunit.

Its function is as follows. GTPase that plays an essential role in the late steps of ribosome biogenesis. The chain is GTPase Der from Bacillus cereus (strain ATCC 10987 / NRS 248).